Consider the following 541-residue polypeptide: MASQEFEVEAIVDKRQDKNGNTQYLVRWKGYDKQDDTWEPEQHLMNCEKCVHDFNRRQTEKQKKLTWTTTSRIFSNNARRRTSRSTKANYSKNSPKTPVTDKHHRSKNCKLFAASKNVRRKAASTLSDTKNMEIINSTIETLAPDSPFDHKKTVSGFQKLEKLDPIAADQQDTVVFKVTEGKLLRDPLSHPGAEQTGIQNKTQMHPLMSQMSGSVTASMATGSATRKGIVVLIDPLAANGTTDMHTSVPRVKGGQRNITDDSRGQPFIKKMHFTIRLTESAITYRDIVVKKEDGFTQIVLSTRSTEKNALNTEVIKEMVNALNSAAADDSKLVLFSAAGSVFCCGLDFGYFVRHLRNDRNTASLEMVDTIKNFVNTFIQFKKPIVVSVNGPAIGLGASILPLCDLVWANEKAWFQTPYTTFGQSPDGCSSITFPKMMGKASANEMLIAGRKLTAREACAKGLVSQVFLTGTFTQEVMIQIKELASYNAIVLEECKALVRCNIKLELEQANERECEVLRKIWSSAQGIESMLKYVENKIDEF.

In terms of domain architecture, Chromo spans 6–66 (FEVEAIVDKR…RQTEKQKKLT (61 aa)). The interval 72–104 (RIFSNNARRRTSRSTKANYSKNSPKTPVTDKHH) is disordered. Positions 87–97 (KANYSKNSPKT) are enriched in polar residues.

Testis specific.

Its subcellular location is the nucleus. It carries out the reaction L-lysyl-[protein] + acetyl-CoA = N(6)-acetyl-L-lysyl-[protein] + CoA + H(+). Functionally, may have histone acetyltransferase activity. This is Testis-specific chromodomain protein Y 2 (CDY2A) from Homo sapiens (Human).